A 143-amino-acid polypeptide reads, in one-letter code: Large ribosomal subunit protein uL11 (143 aa).

It belongs to the universal ribosomal protein uL11 family. As to quaternary structure, part of the ribosomal stalk of the 50S ribosomal subunit. Interacts with L10 and the large rRNA to form the base of the stalk. L10 forms an elongated spine to which L12 dimers bind in a sequential fashion forming a multimeric L10(L12)X complex. Post-translationally, one or more lysine residues are methylated.

Forms part of the ribosomal stalk which helps the ribosome interact with GTP-bound translation factors. This Pseudomonas putida (strain ATCC 700007 / DSM 6899 / JCM 31910 / BCRC 17059 / LMG 24140 / F1) protein is Large ribosomal subunit protein uL11.